The following is a 319-amino-acid chain: Cytochrome c biogenesis protein CcsA (319 aa).

A run of 7 helical transmembrane segments spans residues 17–37 (TISIVITIHLITLLVHELGGL), 44–64 (GMIVTFFSITGFLVSRWASSG), 68–88 (LSNLYESLIFLSWALYILHTI), 143–163 (MLLSYATLLCGSLLSAAILII), 223–243 (VISLGFTLLTIGILCGAVWAN), 257–271 (TWAFITWTIFAIYLH), and 286–306 (VASIGFLIIWICYFGINLLGI).

This sequence belongs to the CcmF/CycK/Ccl1/NrfE/CcsA family. As to quaternary structure, may interact with Ccs1.

It is found in the plastid. The protein localises to the chloroplast thylakoid membrane. In terms of biological role, required during biogenesis of c-type cytochromes (cytochrome c6 and cytochrome f) at the step of heme attachment. This is Cytochrome c biogenesis protein CcsA from Lolium perenne (Perennial ryegrass).